Here is a 154-residue protein sequence, read N- to C-terminus: Putative hydrogenase maturation protease MJ0253 (154 aa).

The protein belongs to the peptidase A31 family.

The polypeptide is Putative hydrogenase maturation protease MJ0253 (Methanocaldococcus jannaschii (strain ATCC 43067 / DSM 2661 / JAL-1 / JCM 10045 / NBRC 100440) (Methanococcus jannaschii)).